The following is a 251-amino-acid chain: Pyrroloquinoline-quinone synthase (251 aa).

It belongs to the PqqC family.

It catalyses the reaction 6-(2-amino-2-carboxyethyl)-7,8-dioxo-1,2,3,4,7,8-hexahydroquinoline-2,4-dicarboxylate + 3 O2 = pyrroloquinoline quinone + 2 H2O2 + 2 H2O + H(+). The protein operates within cofactor biosynthesis; pyrroloquinoline quinone biosynthesis. Ring cyclization and eight-electron oxidation of 3a-(2-amino-2-carboxyethyl)-4,5-dioxo-4,5,6,7,8,9-hexahydroquinoline-7,9-dicarboxylic-acid to PQQ. The polypeptide is Pyrroloquinoline-quinone synthase (Cronobacter sakazakii (strain ATCC BAA-894) (Enterobacter sakazakii)).